A 649-amino-acid polypeptide reads, in one-letter code: Leucine-rich repeat transmembrane protein FLRT3 (649 aa).

Positions 1 to 28 (MISAAWSIFLIGTKIGLFLQVAPLSVMA) are cleaved as a signal peptide. Positions 29–58 (KSCPSVCRCDAGFIYCNDRFLTSIPTGIPE) constitute an LRRNT domain. The Extracellular portion of the chain corresponds to 29-528 (KSCPSVCRCD…KEPYKNPNLP (500 aa)). Cystine bridges form between Cys-31-Cys-37 and Cys-35-Cys-44. Residues 38–67 (DAGFIYCNDRFLTSIPTGIPEDATTLYLQN) form an interaction with ADGRL3 region. LRR repeat units follow at residues 59-80 (DATT…SDLK), 84-104 (KVER…NLPK), 105-126 (YVKE…SLSK), 129-150 (YLEE…EGAF), 155-175 (YLRL…GLPR), 176-197 (TIEE…SLQG), 200-220 (SLKR…GDKV), 226-247 (NLTE…LPGT), 248-269 (NLRK…AFSY), and 272-293 (QLYR…IFDD). N-linked (GlcNAc...) asparagine glycosylation occurs at Asn-226. N-linked (GlcNAc...) asparagine glycans are attached at residues Asn-282 and Asn-296. The LRRCT domain maps to 305–357 (NPWYCGCKMKWVRDWLQSLPVKVNVRGLMCQAPEKVRGMAIKDLNAELFDCKD). A disulfide bond links Cys-309 and Cys-334. Residues 387-407 (KQPDIKNPKLTKDHQTTGSPS) are disordered. A compositionally biased stretch (basic and acidic residues) spans 389–401 (PDIKNPKLTKDHQ). Residues 409–504 (KTITITVKSV…VCIETETAPL (96 aa)) enclose the Fibronectin type-III domain. Residues 529–549 (LAAIIGGAVALVTIALLALVC) form a helical membrane-spanning segment. Residues 550-649 (WYVHRNGSLF…GIPDSDHSHS (100 aa)) are Cytoplasmic-facing. A disordered region spans residues 622–649 (LYKNNHSESSSNRSYRDSGIPDSDHSHS).

In terms of assembly, monomer and homodimer. Self-associates (via leucine-rich repeats), giving rise to homooligomers. Interacts with FGFR1. Interacts (via extracellular domain) with ADGRL1/LPHN1 and LPHN2 (via olfactomedin-like domain). Interacts (via extracellular domain) with ADGRL3 (via olfactomedin-like domain); the interaction is direct. Interacts (via extracellular domain) with UNC5B and UNC5D (via extracellular domain); the interaction is direct. Identified in complexes composed of FLRT3, ADGRL3 and UNC5B, respectively FLRT3, ADGRL3 and UNC5D. May also interact (via extracellular domain) with UNC5A and UNC5C. Interacts (via cytoplasmic domain) with ROBO1. N-glycosylated. Post-translationally, proteolytic cleavage in the juxtamembrane region gives rise to a soluble ectodomain. Cleavage is probably effected by a metalloprotease. As to expression, expressed in kidney, brain, pancreas, skeletal muscle, lung, liver, placenta, and heart.

The protein resides in the cell membrane. It is found in the presynaptic cell membrane. It localises to the endoplasmic reticulum membrane. The protein localises to the cell junction. Its subcellular location is the focal adhesion. The protein resides in the secreted. It is found in the cell projection. It localises to the axon. The protein localises to the growth cone membrane. Functionally, functions in cell-cell adhesion, cell migration and axon guidance, exerting an attractive or repulsive role depending on its interaction partners. Plays a role in the spatial organization of brain neurons. Plays a role in vascular development in the retina. Plays a role in cell-cell adhesion via its interaction with ADGRL3 and probably also other latrophilins that are expressed at the surface of adjacent cells. Interaction with the intracellular domain of ROBO1 mediates axon attraction towards cells expressing NTN1. Mediates axon growth cone collapse and plays a repulsive role in neuron guidance via its interaction with UNC5B, and possibly also other UNC-5 family members. Promotes neurite outgrowth (in vitro). Mediates cell-cell contacts that promote an increase both in neurite number and in neurite length. Plays a role in the regulation of the density of glutamaergic synapses. Plays a role in fibroblast growth factor-mediated signaling cascades. Required for normal morphogenesis during embryonic development, but not for normal embryonic patterning. Required for normal ventral closure, headfold fusion and definitive endoderm migration during embryonic development. Required for the formation of a normal basement membrane and the maintenance of a normal anterior visceral endoderm during embryonic development. The polypeptide is Leucine-rich repeat transmembrane protein FLRT3 (FLRT3) (Homo sapiens (Human)).